The chain runs to 45 residues: Large ribosomal subunit protein bL34 (45 aa).

The interval 1 to 45 is disordered; that stretch reads MTKRTFGGTSRKRKRVSGFRVRMRSHTGRRVIKSRRKRGRDRIAV. A compositionally biased stretch (basic residues) spans 10–45; sequence SRKRKRVSGFRVRMRSHTGRRVIKSRRKRGRDRIAV.

Belongs to the bacterial ribosomal protein bL34 family.

The chain is Large ribosomal subunit protein bL34 from Prochlorococcus marinus (strain MIT 9515).